The sequence spans 501 residues: MNPERQETISPKNVPFQPVPTPNQQSLQSRMLESNQAVPDAFQKVAAWNHYNAVATPPIGVPQTARPPSNQSPHPNPPGYPYQSHQQQFHPLAIAFQQPFGLPQQVIYPPPPPGFTPHRVQVSPVGLLGPPGFFPQFAGSTTSQGNPSEVSVRTKSAEGTTGPIAPSITTKPTSTIQVAPPRDPVAPTTSSSGITKKPENGEFSLVKTISGHTKSVSVIKFSYCGKYLGTGSADKQIKVWNTVDMTYLQTLASHQLGINDFSWSSNSQFIASASDDTTVKIFDVISGACLRTMRGHTNYVFCCSFNPQSSLIASAGFDETVRVWDFKTGLCVKCIPAHSDPITSISYNHDGNTMATSSYDGCIRVWDAASGSCLKTLVDTDHAPVTFVCFSPNGKYLLSAQLDSSLKLWDPKKAKPLKYYNGHKNKKYCLFANMSVPLGKHIISGSEDGRILVWSIQTKQIVQILEGHTTPVLATDSHPTLNIIASGGLEPDNVIRIWRRN.

3 disordered regions span residues 1–35, 58–85, and 155–197; these read MNPERQETISPKNVPFQPVPTPNQQSLQSRMLESN, PIGVPQTARPPSNQSPHPNPPGYPYQSH, and KSAE…ITKK. Positions 22-35 are enriched in polar residues; sequence PNQQSLQSRMLESN. Over residues 167-177 the composition is skewed to polar residues; sequence SITTKPTSTIQ. WD repeat units lie at residues 211-241, 253-283, 295-325, 337-367, 381-410, 422-455, and 467-499; these read GHTKSVSVIKFSYCGKYLGTGSADKQIKVWN, SHQLGINDFSWSSNSQFIASASDDTTVKIFD, GHTNYVFCCSFNPQSSLIASAGFDETVRVWD, AHSDPITSISYNHDGNTMATSSYDGCIRVWD, DHAPVTFVCFSPNGKYLLSAQLDSSLKLWD, GHKNKKYCLFANMSVPLGKHIISGSEDGRILVWS, and GHTTPVLATDSHPTLNIIASGGLEPDNVIRIWR.

It belongs to the WD repeat WDR5/wds family.

Not required for methylation of histone H3 'Lys-4'. This is WD repeat-containing protein wdr-5.3 (wdr-5.3) from Caenorhabditis elegans.